Here is a 274-residue protein sequence, read N- to C-terminus: Thiamine kinase (274 aa).

Belongs to the thiamine kinase family.

The enzyme catalyses thiamine + ATP = thiamine phosphate + ADP + H(+). It functions in the pathway cofactor biosynthesis; thiamine diphosphate biosynthesis; thiamine phosphate from thiamine: step 1/1. Its function is as follows. Catalyzes the ATP-dependent phosphorylation of thiamine to thiamine phosphate. Is involved in thiamine salvage. This Escherichia coli O45:K1 (strain S88 / ExPEC) protein is Thiamine kinase.